Reading from the N-terminus, the 503-residue chain is Aromatase (503 aa).

Helical transmembrane passes span 19–39 and 51–71; these read EVMP…FFVW and GYCM…MGLG. The tract at residues 294 to 324 is substrate-binding pocket; it reads ENVNQCILEMMIAAPDTLSVTVFFMLCLIAQ. Residues aspartate 309 and methionine 374 each contribute to the substrate site. Cysteine 437 contacts heme.

This sequence belongs to the cytochrome P450 family. The cofactor is heme. As to expression, expressed in placenta. Highly expressed in follicles (0 hour:hCG), followed by a drop (12-24 hour:hCG) and by an increase (30-39 hour:hCG). Highly expressed in corpora lutea. Also expressed in granulosa cell layer. Not expressed in theca interna.

It is found in the endoplasmic reticulum membrane. Its subcellular location is the microsome membrane. It catalyses the reaction testosterone + 3 reduced [NADPH--hemoprotein reductase] + 3 O2 = 17beta-estradiol + formate + 3 oxidized [NADPH--hemoprotein reductase] + 4 H2O + 4 H(+). It carries out the reaction androst-4-ene-3,17-dione + 3 reduced [NADPH--hemoprotein reductase] + 3 O2 = estrone + formate + 3 oxidized [NADPH--hemoprotein reductase] + 4 H2O + 4 H(+). The catalysed reaction is androst-4-ene-3,17-dione + reduced [NADPH--hemoprotein reductase] + O2 = 19-hydroxyandrost-4-ene-3,17-dione + oxidized [NADPH--hemoprotein reductase] + H2O + H(+). The enzyme catalyses 19-hydroxyandrost-4-ene-3,17-dione + reduced [NADPH--hemoprotein reductase] + O2 = 19-oxo-androst-4-ene-3,17-dione + oxidized [NADPH--hemoprotein reductase] + 2 H2O + H(+). It catalyses the reaction 19-oxo-androst-4-ene-3,17-dione + reduced [NADPH--hemoprotein reductase] + O2 = estrone + formate + oxidized [NADPH--hemoprotein reductase] + H2O + 2 H(+). It carries out the reaction estrone + reduced [NADPH--hemoprotein reductase] + O2 = 2-hydroxyestrone + oxidized [NADPH--hemoprotein reductase] + H2O + H(+). The catalysed reaction is 17beta-hydroxy-5alpha-androstan-3-one + reduced [NADPH--hemoprotein reductase] + O2 = 17beta,19-dihydroxy-3-oxo-5alpha-androstanone + oxidized [NADPH--hemoprotein reductase] + H2O + H(+). The enzyme catalyses 17beta,19-dihydroxy-3-oxo-5alpha-androstanone + reduced [NADPH--hemoprotein reductase] + O2 = 17beta-hydroxy-3,19-dioxo-5alpha-androstanone + oxidized [NADPH--hemoprotein reductase] + 2 H2O + H(+). It catalyses the reaction 17beta-hydroxy-3,19-dioxo-5alpha-androstanone + reduced [NADPH--hemoprotein reductase] + O2 = 17beta-hydroxy-3-oxo-19-nor-5alpha-androst-1-ene + formate + oxidized [NADPH--hemoprotein reductase] + H2O + 2 H(+). It participates in steroid hormone biosynthesis. A cytochrome P450 monooxygenase that catalyzes the conversion of C19 androgens, androst-4-ene-3,17-dione (androstenedione) and testosterone to the C18 estrogens, estrone and estradiol, respectively. Catalyzes three successive oxidations of C19 androgens: two conventional oxidations at C19 yielding 19-hydroxy and 19-oxo/19-aldehyde derivatives, followed by a third oxidative aromatization step that involves C1-beta hydrogen abstraction combined with cleavage of the C10-C19 bond to yield a phenolic A ring and formic acid. Alternatively, the third oxidative reaction yields a 19-norsteroid and formic acid. Converts dihydrotestosterone to delta1,10-dehydro 19-nordihydrotestosterone and may play a role in homeostasis of this potent androgen. Also displays 2-hydroxylase activity toward estrone. Mechanistically, uses molecular oxygen inserting one oxygen atom into a substrate, and reducing the second into a water molecule, with two electrons provided by NADPH via cytochrome P450 reductase (CPR; NADPH-ferrihemoprotein reductase). The sequence is that of Aromatase (CYP19A1) from Equus caballus (Horse).